Reading from the N-terminus, the 544-residue chain is Sphingosine-1-phosphate lyase (544 aa).

The Lumenal segment spans residues Met1 to Pro29. Residues Leu30–Phe50 traverse the membrane as a helical; Signal-anchor for type III membrane protein segment. The Cytoplasmic segment spans residues Gly51–Tyr544. Lys349 carries the post-translational modification N6-(pyridoxal phosphate)lysine.

Belongs to the group II decarboxylase family. Sphingosine-1-phosphate lyase subfamily. The cofactor is pyridoxal 5'-phosphate. In terms of tissue distribution, expressed in the peripheral parts of leaves and the bases of trichomes.

The protein localises to the endoplasmic reticulum membrane. It carries out the reaction sphinganine 1-phosphate = hexadecanal + phosphoethanolamine. It functions in the pathway lipid metabolism; sphingolipid metabolism. Cleaves phosphorylated sphingoid bases (PSBs), such as sphingosine-1-phosphate, into fatty aldehydes and phosphoethanolamine. May play a minor role in maintenance of sphingolipid metabolism during normal plant development and growth, but be required for maintaining sphingoid long chain bases (LCB) and their phosphorylated derivatives (LCB-P) levels when sphingolipid metabolism is perturbed. May play a role in dehydration stress. This Arabidopsis thaliana (Mouse-ear cress) protein is Sphingosine-1-phosphate lyase (DPL1).